The sequence spans 619 residues: Chaperone protein HscA homolog (619 aa).

This sequence belongs to the heat shock protein 70 family.

Its function is as follows. Chaperone involved in the maturation of iron-sulfur cluster-containing proteins. Has a low intrinsic ATPase activity which is markedly stimulated by HscB. This chain is Chaperone protein HscA homolog, found in Methylococcus capsulatus (strain ATCC 33009 / NCIMB 11132 / Bath).